Here is a 291-residue protein sequence, read N- to C-terminus: Undecaprenyl-diphosphatase (291 aa).

A run of 8 helical transmembrane segments spans residues 1–21, 48–68, 102–122, 126–146, 162–182, 203–223, 231–251, and 267–287; these read MFII…LTEF, SAFT…AWVF, LHVL…DDFI, LFSV…MIIA, ISYF…WPGF, SDFT…LSLL, IADI…GLIA, and FAIY…GFGI.

Belongs to the UppP family.

It is found in the cell membrane. It catalyses the reaction di-trans,octa-cis-undecaprenyl diphosphate + H2O = di-trans,octa-cis-undecaprenyl phosphate + phosphate + H(+). In terms of biological role, catalyzes the dephosphorylation of undecaprenyl diphosphate (UPP). Confers resistance to bacitracin. The polypeptide is Undecaprenyl-diphosphatase (Staphylococcus aureus (strain MRSA252)).